The following is a 208-amino-acid chain: Large ribosomal subunit protein uL3 (208 aa).

The tract at residues 126 to 150 (NQSRGPMAHGSRYHRRPGSMGPVAP) is disordered.

This sequence belongs to the universal ribosomal protein uL3 family. In terms of assembly, part of the 50S ribosomal subunit. Forms a cluster with proteins L14 and L19.

Its function is as follows. One of the primary rRNA binding proteins, it binds directly near the 3'-end of the 23S rRNA, where it nucleates assembly of the 50S subunit. In Exiguobacterium sibiricum (strain DSM 17290 / CCUG 55495 / CIP 109462 / JCM 13490 / 255-15), this protein is Large ribosomal subunit protein uL3.